A 761-amino-acid polypeptide reads, in one-letter code: Wall-associated receptor kinase-like 4 (761 aa).

Residues 1-26 form the signal peptide; it reads MKKETQNLQCIPLVISVLSLFGVSSA. Residues 27–349 lie on the Extracellular side of the membrane; that stretch reads RKPPYLCNRV…EPKKPGQIKP (323 aa). N-linked (GlcNAc...) asparagine glycosylation is found at Asn64, Asn166, Asn206, Asn226, and Asn262. The atypical EGF-like stretch occupies residues 278–339; that stretch reads CVCSYGYFSG…CVNKPGWFTC (62 aa). Intrachain disulfides connect Cys280-Cys293, Cys316-Cys330, and Cys325-Cys339. The helical transmembrane segment at 350–370 threads the bilayer; sequence VFQGVLIGSALLLFAFGIFGL. At 371-761 the chain is on the cytoplasmic side; sequence YKFIKKQRRS…VEPLVPLRTW (391 aa). The Protein kinase domain maps to 424–697; it reads FNTNRVLGQG…REVSVELERI (274 aa). ATP-binding positions include 430 to 438 and Lys452; that span reads LGQGGQGTV. Residue Tyr497 is modified to Phosphotyrosine. Asp549 (proton acceptor) is an active-site residue. Residues Thr583 and Thr588 each carry the phosphothreonine modification. Phosphotyrosine is present on Tyr596. Positions 701-761 are disordered; sequence SYKSEIHNDD…VEPLVPLRTW (61 aa). Over residues 708–732 the composition is skewed to acidic residues; the sequence is NDDDDDDDDDDEDDQAMELNIEETW.

This sequence belongs to the protein kinase superfamily. Ser/Thr protein kinase family. As to expression, expressed in the whole plant. Detected in root-shoot junctions and lateral root initiation sites.

Its subcellular location is the membrane. It carries out the reaction L-seryl-[protein] + ATP = O-phospho-L-seryl-[protein] + ADP + H(+). The enzyme catalyses L-threonyl-[protein] + ATP = O-phospho-L-threonyl-[protein] + ADP + H(+). Its function is as follows. Serine/threonine-protein kinase that may function as a signaling receptor of extracellular matrix component. Plays a role in plant mineral nutrients response. In Arabidopsis thaliana (Mouse-ear cress), this protein is Wall-associated receptor kinase-like 4 (WAKL4).